A 235-amino-acid chain; its full sequence is 5'-methylthioadenosine/S-adenosylhomocysteine nucleosidase (235 aa).

Catalysis depends on Glu13, which acts as the Proton acceptor. Residues Gly79, Met154, and 175-176 (ME) contribute to the substrate site. The Proton donor role is filled by Asp199.

This sequence belongs to the PNP/UDP phosphorylase family. MtnN subfamily.

The enzyme catalyses S-adenosyl-L-homocysteine + H2O = S-(5-deoxy-D-ribos-5-yl)-L-homocysteine + adenine. The catalysed reaction is S-methyl-5'-thioadenosine + H2O = 5-(methylsulfanyl)-D-ribose + adenine. It catalyses the reaction 5'-deoxyadenosine + H2O = 5-deoxy-D-ribose + adenine. The protein operates within amino-acid biosynthesis; L-methionine biosynthesis via salvage pathway; S-methyl-5-thio-alpha-D-ribose 1-phosphate from S-methyl-5'-thioadenosine (hydrolase route): step 1/2. Functionally, catalyzes the irreversible cleavage of the glycosidic bond in both 5'-methylthioadenosine (MTA) and S-adenosylhomocysteine (SAH/AdoHcy) to adenine and the corresponding thioribose, 5'-methylthioribose and S-ribosylhomocysteine, respectively. Also cleaves 5'-deoxyadenosine, a toxic by-product of radical S-adenosylmethionine (SAM) enzymes, into 5-deoxyribose and adenine. The polypeptide is 5'-methylthioadenosine/S-adenosylhomocysteine nucleosidase (Chromohalobacter salexigens (strain ATCC BAA-138 / DSM 3043 / CIP 106854 / NCIMB 13768 / 1H11)).